A 558-amino-acid chain; its full sequence is Formate--tetrahydrofolate ligase (558 aa).

Position 67-74 (67-74) interacts with ATP; that stretch reads TPAGEGKT.

It belongs to the formate--tetrahydrofolate ligase family.

It carries out the reaction (6S)-5,6,7,8-tetrahydrofolate + formate + ATP = (6R)-10-formyltetrahydrofolate + ADP + phosphate. The protein operates within one-carbon metabolism; tetrahydrofolate interconversion. The sequence is that of Formate--tetrahydrofolate ligase from Roseobacter denitrificans (strain ATCC 33942 / OCh 114) (Erythrobacter sp. (strain OCh 114)).